Here is a 154-residue protein sequence, read N- to C-terminus: Prefoldin subunit 2 (154 aa).

Disordered regions lie at residues 1–20 (MADSSGRVGKSGGSGAGKGA) and 126–154 (LMGEDEKPAAKENSEGAGAKASSAGVLVS). Over residues 9-18 (GKSGGSGAGK) the composition is skewed to gly residues. The span at 126–139 (LMGEDEKPAAKENS) shows a compositional bias: basic and acidic residues. Residues 140–154 (EGAGAKASSAGVLVS) show a composition bias toward low complexity.

This sequence belongs to the prefoldin subunit beta family. Heterohexamer of two PFD-alpha type and four PFD-beta type subunits. Component of the PAQosome complex which is responsible for the biogenesis of several protein complexes and which consists of R2TP complex members RUVBL1, RUVBL2, RPAP3 and PIH1D1, URI complex members PFDN2, PFDN6, PDRG1, UXT and URI1 as well as ASDURF, POLR2E and DNAAF10/WDR92. Interacts with URI1; the interaction is phosphorylation-dependent and occurs in a growth-dependent manner.

Its subcellular location is the nucleus. It is found in the cytoplasm. It localises to the mitochondrion. Functionally, binds specifically to cytosolic chaperonin (c-CPN) and transfers target proteins to it. Binds to nascent polypeptide chain and promotes folding in an environment in which there are many competing pathways for nonnative proteins. In Mus musculus (Mouse), this protein is Prefoldin subunit 2 (Pfdn2).